Here is a 255-residue protein sequence, read N- to C-terminus: MTIDLNCDLGESFGVWSMGNDAAMIDLATSVNIACGFHAGDADTMKKTVDLAKARGVSIGAHPGYRDLHGFGRRPVVGLSSSELENLVAYQIGALQAIATMAGHKVTHVKAHGALSNIACDDDMTARAIASAIKAVDPDLVFVVLANSRLVAAGEALGLSMVHEVFADRAYEDDGSLVSRRKPGAVLHDADAIAQRVVKMIQSGEVVSITGKTIKMRMDTVCIHGDTPGAVEIARALRKALKDNGIAVAPFKTAK.

It belongs to the LamB/PxpA family. Forms a complex composed of PxpA, PxpB and PxpC.

The enzyme catalyses 5-oxo-L-proline + ATP + 2 H2O = L-glutamate + ADP + phosphate + H(+). In terms of biological role, catalyzes the cleavage of 5-oxoproline to form L-glutamate coupled to the hydrolysis of ATP to ADP and inorganic phosphate. The chain is 5-oxoprolinase subunit A from Nitrobacter hamburgensis (strain DSM 10229 / NCIMB 13809 / X14).